The following is a 160-amino-acid chain: Transcriptional repressor NrdR (160 aa).

The segment at 3-34 (CPYCQYEDTQVKDSRPSEEGTVIRRRRICSVC) is a zinc-finger region. The region spanning 49-139 (LLVLKKSGRY…VYRDFRNASD (91 aa)) is the ATP-cone domain.

Belongs to the NrdR family. Zn(2+) is required as a cofactor.

Its function is as follows. Negatively regulates transcription of bacterial ribonucleotide reductase nrd genes and operons by binding to NrdR-boxes. The protein is Transcriptional repressor NrdR of Bartonella henselae (strain ATCC 49882 / DSM 28221 / CCUG 30454 / Houston 1) (Rochalimaea henselae).